A 366-amino-acid polypeptide reads, in one-letter code: tRNA/tmRNA (uracil-C(5))-methyltransferase (366 aa).

S-adenosyl-L-methionine-binding residues include Gln190, Tyr218, Asn223, Glu239, and Asp299. Catalysis depends on Cys324, which acts as the Nucleophile. Catalysis depends on Glu358, which acts as the Proton acceptor.

This sequence belongs to the class I-like SAM-binding methyltransferase superfamily. RNA M5U methyltransferase family. TrmA subfamily.

The catalysed reaction is uridine(54) in tRNA + S-adenosyl-L-methionine = 5-methyluridine(54) in tRNA + S-adenosyl-L-homocysteine + H(+). It catalyses the reaction uridine(341) in tmRNA + S-adenosyl-L-methionine = 5-methyluridine(341) in tmRNA + S-adenosyl-L-homocysteine + H(+). In terms of biological role, dual-specificity methyltransferase that catalyzes the formation of 5-methyluridine at position 54 (m5U54) in all tRNAs, and that of position 341 (m5U341) in tmRNA (transfer-mRNA). The protein is tRNA/tmRNA (uracil-C(5))-methyltransferase of Escherichia coli O157:H7 (strain EC4115 / EHEC).